The sequence spans 686 residues: XK-related protein 5 (686 aa).

The next 5 helical transmembrane spans lie at 33-53, 205-225, 239-259, 265-285, and 297-317; these read LLWGWLALAVLLPGFLVQALS, HFWVFVVAGAHWLVMTFWLVA, LFNLLVGAVYILCYLSFWDSP, VTFYMVMLLENTILLLLATDF, and IAGVLSGFLIGSVSLVIYYSL. 3 disordered regions span residues 340-362, 444-470, and 490-589; these read DKTERRASPRATDLAGKRTESSG, LQRKALSAQRELPSSSRHPSTLENSSA, and FASD…VGLA. Polar residues-rich tracts occupy residues 455-470 and 490-509; these read LPSSSRHPSTLENSSA and FASDQQDEAPTQNPAATQGE. Positions 523-536 are enriched in gly residues; the sequence is QGKGTGGQQRGGEG. A compositionally biased stretch (polar residues) spans 550–567; sequence VATSSQQEGSPATLQTAH.

The protein belongs to the XK family.

Its subcellular location is the cell membrane. This is XK-related protein 5 from Pan troglodytes (Chimpanzee).